The sequence spans 27 residues: Ganodermin (27 aa).

Its function is as follows. Has antifungal activity against B.cinera, F.oxysporum and P.piricola with IC(50) values of 15.2 uM, 12.4 uM and 18.1 uM, respectively. Lacks hemagglutinating activity towards rabbit erythrocytes. Lacks deoxyribonuclease, ribonuclease and protease inhibitory activities. This chain is Ganodermin, found in Ganoderma lucidum (Ling zhi medicinal fungus).